A 444-amino-acid polypeptide reads, in one-letter code: tRNA-2-methylthio-N(6)-dimethylallyladenosine synthase (444 aa).

In terms of domain architecture, MTTase N-terminal spans 8–122 (KTFYIETFGC…LAEMLVQIES (115 aa)). The [4Fe-4S] cluster site is built by Cys17, Cys53, Cys85, Cys160, Cys164, and Cys167. The region spanning 146–376 (RGNAHRGYIT…MEHQREIQRA (231 aa)) is the Radical SAM core domain. The TRAM domain occupies 379–444 (RKHIGETIEV…PNSLVGELVG (66 aa)).

This sequence belongs to the methylthiotransferase family. MiaB subfamily. As to quaternary structure, monomer. [4Fe-4S] cluster is required as a cofactor.

Its subcellular location is the cytoplasm. The catalysed reaction is N(6)-dimethylallyladenosine(37) in tRNA + (sulfur carrier)-SH + AH2 + 2 S-adenosyl-L-methionine = 2-methylsulfanyl-N(6)-dimethylallyladenosine(37) in tRNA + (sulfur carrier)-H + 5'-deoxyadenosine + L-methionine + A + S-adenosyl-L-homocysteine + 2 H(+). Catalyzes the methylthiolation of N6-(dimethylallyl)adenosine (i(6)A), leading to the formation of 2-methylthio-N6-(dimethylallyl)adenosine (ms(2)i(6)A) at position 37 in tRNAs that read codons beginning with uridine. The chain is tRNA-2-methylthio-N(6)-dimethylallyladenosine synthase from Koribacter versatilis (strain Ellin345).